The sequence spans 281 residues: DegV domain-containing protein CPE2509 (281 aa).

The 276-residue stretch at 4–279 (IAIITDSSCD…PGMVGVSIQK (276 aa)) folds into the DegV domain. Hexadecanoate-binding residues include threonine 60 and serine 93.

In terms of biological role, may bind long-chain fatty acids, such as palmitate, and may play a role in lipid transport or fatty acid metabolism. The polypeptide is DegV domain-containing protein CPE2509 (Clostridium perfringens (strain 13 / Type A)).